Here is a 442-residue protein sequence, read N- to C-terminus: Hydroxycinnamoyltransferase 1 (442 aa).

Residues histidine 159 and aspartate 389 each act as proton acceptor in the active site.

It belongs to the plant acyltransferase family. As to expression, expressed in roots, leaves, stems and seeds.

Its function is as follows. Hydroxycinnamoyl transferase that catalyzes the transfer of an acyl from p-coumaryol-CoA to various acyl acceptors. Can use feruloyl-CoA and caffeoyl-CoA as acyl donors. In Oryza sativa subsp. japonica (Rice), this protein is Hydroxycinnamoyltransferase 1.